A 496-amino-acid polypeptide reads, in one-letter code: tRNA modification GTPase mss1, mitochondrial (496 aa).

The N-terminal 19 residues, 1–19, are a transit peptide targeting the mitochondrion; sequence MRILNRVFLNTFQACFRRF. The TrmE-type G domain maps to 239 to 416; it reads GINVAILGPS…FLQALSSTFE (178 aa). Residues 246-253, 293-297, and 363-366 each bind GTP; these read GPSNAGKS, DTAGL, and NKVD.

Belongs to the TRAFAC class TrmE-Era-EngA-EngB-Septin-like GTPase superfamily. TrmE GTPase family.

The protein resides in the mitochondrion. Its function is as follows. GTPase involved in the 5-carboxymethylaminomethyl modification (mnm(5)s(2)U34) of the wobble uridine base in mitochondrial tRNAs. The sequence is that of tRNA modification GTPase mss1, mitochondrial (mss1) from Schizosaccharomyces pombe (strain 972 / ATCC 24843) (Fission yeast).